The chain runs to 173 residues: Myosin light chain 5 (173 aa).

Residues 1 to 22 form a disordered region; that stretch reads MASRKTKKKEGGGLRAQRASSN. EF-hand domains follow at residues 30 to 65, 100 to 135, and 136 to 171; these read TQIQ…LGKT, DAEE…QADK, and MTAE…GEEK. Asp-43, Asn-45, Asp-47, and Asp-54 together coordinate Ca(2+).

As to quaternary structure, myosin is a hexamer of 2 heavy chains and 4 light chains. In terms of tissue distribution, jaw-closing muscles.

The polypeptide is Myosin light chain 5 (MYL5) (Felis catus (Cat)).